We begin with the raw amino-acid sequence, 508 residues long: Protein S-acyltransferase 18 (508 aa).

2 helical membrane passes run 17 to 37 (IVGA…LGFF) and 42 to 62 (IAVI…IVLF). The 51-residue stretch at 158–208 (SYCSLCDLEVKRSSKHCRTCNRCVEGFDHHCRWLNNCVGKKNYTTFILLMV) folds into the DHHC domain. Cysteine 188 serves as the catalytic S-palmitoyl cysteine intermediate. 2 helical membrane passes run 203–223 (FILL…TALA) and 250–270 (WALA…SAAM). The interval 443–468 (VSPGRFSSPRRRFSGSSSSTVPSPKQ) is disordered. Residues 456–466 (SGSSSSTVPSP) show a composition bias toward low complexity.

The protein belongs to the DHHC palmitoyltransferase family.

The protein localises to the endoplasmic reticulum membrane. It localises to the cytoplasmic vesicle membrane. It catalyses the reaction L-cysteinyl-[protein] + hexadecanoyl-CoA = S-hexadecanoyl-L-cysteinyl-[protein] + CoA. Its function is as follows. S-acyltransferase involved in protein lipid modification. The chain is Protein S-acyltransferase 18 (PAT18) from Arabidopsis thaliana (Mouse-ear cress).